Reading from the N-terminus, the 444-residue chain is Exodeoxyribonuclease 7 large subunit (444 aa).

This sequence belongs to the XseA family. Heterooligomer composed of large and small subunits.

Its subcellular location is the cytoplasm. The catalysed reaction is Exonucleolytic cleavage in either 5'- to 3'- or 3'- to 5'-direction to yield nucleoside 5'-phosphates.. In terms of biological role, bidirectionally degrades single-stranded DNA into large acid-insoluble oligonucleotides, which are then degraded further into small acid-soluble oligonucleotides. The sequence is that of Exodeoxyribonuclease 7 large subunit from Xylella fastidiosa (strain M23).